A 308-amino-acid chain; its full sequence is MLTVQELVDDNADKIPFSWIAGHDAADRAISDDGMAAADLVGHLNLIHPSRIQVFGQEELAYYTRFDLRRRMHHMDELLIGGVPAILLADGLTPPQDLIDQCAQHQVPLLSTPVAAAQLIDLLRIYLGKKLAPTTTVHGVFLDVLGLGVLITGESGLGKSELALELISRGHGLVADDAVELSRTAPGVIEGHCPQLLQNLLEVRGLGLLDIRTIFGETSVRRKMRLKLIVHLVRATAQDKFERLPLQDITQDMLGLPIRKVMLQVAAGRNLAVLVEAAVRNTILKLRGIDTLGEFMERQAMAILQSSK.

Catalysis depends on residues His-138 and Lys-159. Residue 153 to 160 (GESGLGKS) participates in ATP binding. Ser-160 contributes to the Mg(2+) binding site. The active-site Proton acceptor; for phosphorylation activity. Proton donor; for dephosphorylation activity is the Asp-177. Residues 201–210 (LEVRGLGLLD) form an important for the catalytic mechanism of both phosphorylation and dephosphorylation region. Residue Glu-202 participates in Mg(2+) binding. Arg-243 is an active-site residue. An important for the catalytic mechanism of dephosphorylation region spans residues 264-269 (QVAAGR).

This sequence belongs to the HPrK/P family. Homohexamer. Requires Mg(2+) as cofactor.

It catalyses the reaction [HPr protein]-L-serine + ATP = [HPr protein]-O-phospho-L-serine + ADP + H(+). It carries out the reaction [HPr protein]-O-phospho-L-serine + phosphate + H(+) = [HPr protein]-L-serine + diphosphate. In terms of biological role, catalyzes the ATP- as well as the pyrophosphate-dependent phosphorylation of a specific serine residue in HPr, a phosphocarrier protein of the phosphoenolpyruvate-dependent sugar phosphotransferase system (PTS). HprK/P also catalyzes the pyrophosphate-producing, inorganic phosphate-dependent dephosphorylation (phosphorolysis) of seryl-phosphorylated HPr (P-Ser-HPr). In Bordetella pertussis (strain Tohama I / ATCC BAA-589 / NCTC 13251), this protein is HPr kinase/phosphorylase.